The following is a 139-amino-acid chain: MRFTPILRQIPKLKLSEVLVKAGDGVPTGLAGIYKHPNPRPALVTLYNETLKTLKENFPADSVYRQSTEALTQNRLMIVESEEIVENIENQIGGGLIEEIVIQAADELSLASQLGGLKVWEELEEKPLDDQWVYFGKKI.

It belongs to the complex I NDUFA5 subunit family.

Its subcellular location is the mitochondrion inner membrane. Functionally, accessory subunit of the mitochondrial membrane respiratory chain NADH dehydrogenase (Complex I), that is believed not to be involved in catalysis. Complex I functions in the transfer of electrons from NADH to the respiratory chain. The immediate electron acceptor for the enzyme is believed to be ubiquinone. Involved in osmotic and oxidative resistance, yeast to hypha transition and the ability to damage and invade oral epithelial cells. In Candida albicans (strain SC5314 / ATCC MYA-2876) (Yeast), this protein is NADH dehydrogenase [ubiquinone] 1 alpha subcomplex subunit MCI4.